We begin with the raw amino-acid sequence, 293 residues long: 4-diphosphocytidyl-2-C-methyl-D-erythritol kinase (293 aa).

Lysine 16 is an active-site residue. 99–109 is a binding site for ATP; the sequence is PMGAGLGGGSS. The active site involves aspartate 141.

It belongs to the GHMP kinase family. IspE subfamily.

It carries out the reaction 4-CDP-2-C-methyl-D-erythritol + ATP = 4-CDP-2-C-methyl-D-erythritol 2-phosphate + ADP + H(+). The protein operates within isoprenoid biosynthesis; isopentenyl diphosphate biosynthesis via DXP pathway; isopentenyl diphosphate from 1-deoxy-D-xylulose 5-phosphate: step 3/6. Functionally, catalyzes the phosphorylation of the position 2 hydroxy group of 4-diphosphocytidyl-2C-methyl-D-erythritol. This is 4-diphosphocytidyl-2-C-methyl-D-erythritol kinase from Burkholderia orbicola (strain MC0-3).